We begin with the raw amino-acid sequence, 717 residues long: uncharacterized protein (717 aa).

Residues 19 to 38 form a helical membrane-spanning segment; that stretch reads VFLSTIFVSIIFCLGILFLV.

To E.coli YtfN.

The protein localises to the membrane. This is an uncharacterized protein from Buchnera aphidicola subsp. Baizongia pistaciae (strain Bp).